The chain runs to 104 residues: QPKSTPTLTVFPPSSEELKENKATLVCLISNFSPSGVTVAWKANGTPITQGVDTSNPTKEGNKFMASSFLHLTSDQWRSHNSFTCQVTHEGDTVEKSLSPAECL.

The 94-residue stretch at 6 to 99 (PTLTVFPPSS…EGDTVEKSLS (94 aa)) folds into the Ig-like domain. Cysteines 27 and 85 form a disulfide.

The chain is Ig lambda-2 chain C region (Iglc2) from Mus musculus (Mouse).